The chain runs to 162 residues: Peptidyl-prolyl cis-trans isomerase (162 aa).

One can recognise a PPIase cyclophilin-type domain in the interval 5–161 (FFDVIANGQP…ARIVIDKCGT (157 aa)).

Belongs to the cyclophilin-type PPIase family. PPIase A subfamily.

It is found in the cytoplasm. The catalysed reaction is [protein]-peptidylproline (omega=180) = [protein]-peptidylproline (omega=0). Its activity is regulated as follows. Binds cyclosporin A (CsA). CsA mediates some of its effects via an inhibitory action on PPIase. In terms of biological role, PPIases accelerate the folding of proteins. It catalyzes the cis-trans isomerization of proline imidic peptide bonds in oligopeptides. The protein is Peptidyl-prolyl cis-trans isomerase (ppi1) of Schizosaccharomyces pombe (strain 972 / ATCC 24843) (Fission yeast).